Here is a 633-residue protein sequence, read N- to C-terminus: Extracellular metalloproteinase 3 (633 aa).

A signal peptide spans 1 to 18; sequence MHGLLLAGLLALPMNVLA. A propeptide spanning residues 19–246 is cleaved from the precursor; sequence HPAEHHASNV…VHNVVDYVAS (228 aa). N-linked (GlcNAc...) asparagine glycosylation is found at Asn-232 and Asn-410. His-429 lines the Zn(2+) pocket. The active site involves Glu-430. His-433 lines the Zn(2+) pocket. N-linked (GlcNAc...) asparagine glycans are attached at residues Asn-480 and Asn-622.

Belongs to the peptidase M36 family. Zn(2+) serves as cofactor.

The protein resides in the secreted. Secreted metalloproteinase that allows assimilation of proteinaceous substrates and probably acts as a virulence factor. The polypeptide is Extracellular metalloproteinase 3 (MEP3) (Arthroderma gypseum (strain ATCC MYA-4604 / CBS 118893) (Microsporum gypseum)).